We begin with the raw amino-acid sequence, 295 residues long: Undecaprenyl-diphosphatase (295 aa).

6 consecutive transmembrane segments (helical) span residues 39-59 (PGAA…LLYF), 97-117 (WYII…QHAI), 121-141 (LRNL…LWIV), 198-218 (AFLM…VKAI), 232-252 (ATIA…IGFL), and 263-283 (FAIY…CGVL).

It belongs to the UppP family.

The protein resides in the cell membrane. The catalysed reaction is di-trans,octa-cis-undecaprenyl diphosphate + H2O = di-trans,octa-cis-undecaprenyl phosphate + phosphate + H(+). Catalyzes the dephosphorylation of undecaprenyl diphosphate (UPP). Confers resistance to bacitracin. This Bifidobacterium animalis subsp. lactis (strain AD011) protein is Undecaprenyl-diphosphatase.